We begin with the raw amino-acid sequence, 728 residues long: 1,4-alpha-glucan branching enzyme GlgB (728 aa).

Aspartate 405 (nucleophile) is an active-site residue. Glutamate 458 (proton donor) is an active-site residue. The tract at residues 686 to 712 is disordered; the sequence is YHGSNAGNAGAVQSDEHESHGRPHSLS.

It belongs to the glycosyl hydrolase 13 family. GlgB subfamily. Monomer.

It carries out the reaction Transfers a segment of a (1-&gt;4)-alpha-D-glucan chain to a primary hydroxy group in a similar glucan chain.. It functions in the pathway glycan biosynthesis; glycogen biosynthesis. Functionally, catalyzes the formation of the alpha-1,6-glucosidic linkages in glycogen by scission of a 1,4-alpha-linked oligosaccharide from growing alpha-1,4-glucan chains and the subsequent attachment of the oligosaccharide to the alpha-1,6 position. This is 1,4-alpha-glucan branching enzyme GlgB from Enterobacter sp. (strain 638).